Consider the following 804-residue polypeptide: MEPNNCKTSESEEDDIEEEESEEECVREESTTPNSTQQALRKADYKEFENGVALSVVAKKIPKKILSATDTDDLEVGRRRRKRKRRPLAINLTNCKYESVRRAAQMCGLKEVGEDEEWTVYWTDCSVSLERVMDMKRFQKINHFPGMTEICRKDLLARNLNRMQKLYPTEYNIFPRTWCLPADYGDFQAYGRQRKTRTYICKPDSGCQGRGIFITRTPKEIKPGEHMICQQYITKPFLIDGFKFDMRIYVLITSCDPLRIFMYEEGLARFATMPYVEPSHNNLEEVCMHLTNYAINKHNENFVRDDAVGSKRKLSTLNAWLREHSHDPQELWGDIEDIIIKTIISAHSVLRHNYRTCFPQYLCGGTCACFEILGFDILLDHKLKPWLLEVNHSPSFTTDSRLDREVKDALLCDAMNLVNLRGCDKKKVIEEDKRRVKERLFPCHQQPRETRREQFELSQAAMHDQERYEDSHLGGYRRIYPGPDSEKYAPFFKHNGSLFQETAASKAREECARQQLEEIRLKQEQQENPGTKKRKENKEQNQGESAGEKSRSRTATRVLATSLAYRNRNREKELLPVQLDTTQPQDIVEEEELERMKLLLQRENLIRSLGIVEQLTRMLYPSHRSHRKLHEYRPRFHQDGLSSQELQPVNLVPLVLLRGAASEQIPPHFLQPLRPHELIPRILGPLSSINPAIAQHSRYHLQPKNFNWIGDSAATGPCSLSMKKSGRHYISSSRVRLTSRKRRKAQHSTKTANGLQSLLIERLPTSSRLKSSGQDLCLQKAKNTETPRVLQHSKILWGSVKTKR.

Residues 1-41 (MEPNNCKTSESEEDDIEEEESEEECVREESTTPNSTQQALR) form a disordered region. Positions 4–30 (NNCKTSESEEDDIEEEESEEECVREES) form a coiled coil. Over residues 11-26 (SEEDDIEEEESEEECV) the composition is skewed to acidic residues. The TTL domain occupies 85 to 430 (RRPLAINLTN…RGCDKKKVIE (346 aa)). ATP-binding positions include lysine 202, 208–209 (QG), 230–233 (QQYI), and 243–245 (KFD). Residue glutamine 208 participates in a protein binding. Arginine 269 is a binding site for L-glutamate. ATP is bound at residue 291–292 (TN). Positions 293 and 311 each coordinate L-glutamate. Positions 376, 389, and 391 each coordinate Mg(2+). Histidine 392 is a binding site for a protein. Residues 401-482 (RLDREVKDAL…LGGYRRIYPG (82 aa)) form a c-MTBD region region. Lysine 407 provides a ligand contact to L-glutamate. Coiled-coil stretches lie at residues 504–541 (ASKAREECARQQLEEIRLKQEQQENPGTKKRKENKEQN) and 585–609 (QDIVEEEELERMKLLLQRENLIRSL). A disordered region spans residues 519 to 556 (IRLKQEQQENPGTKKRKENKEQNQGESAGEKSRSRTAT). Positions 536–551 (ENKEQNQGESAGEKSR) are enriched in basic and acidic residues.

This sequence belongs to the tubulin--tyrosine ligase family. Mg(2+) is required as a cofactor. In terms of tissue distribution, highly expressed in heart and testis. Expressed in brain, kidney, liver, lung, muscle and trachea. In the brain, expressed in ependymal cilia, cortex, corpus callosum and striatum.

The enzyme catalyses (L-glutamyl)(n)-gamma-L-glutamyl-L-glutamyl-[protein] + L-glutamate + ATP = (L-glutamyl)(n+1)-gamma-L-glutamyl-L-glutamyl-[protein] + ADP + phosphate + H(+). Its function is as follows. Polyglutamylase which modifies tubulin, generating polyglutamate side chains of variable lengths on the gamma-carboxyl group of specific glutamate residues within the C-terminal tail of tubulin. Mediates ATP-dependent polyglutamate side-chain elongation of the polyglutamylation reaction but not the initiation step. Preferentially modifies the alpha-tubulin tail over a beta-tail. This chain is Tubulin polyglutamylase TTLL13, found in Mus musculus (Mouse).